We begin with the raw amino-acid sequence, 689 residues long: ATP-dependent zinc metalloprotease FtsH 2 (689 aa).

Topologically, residues 1 to 3 (MRK) are cytoplasmic. A helical membrane pass occupies residues 4–24 (FFRGASFYILAFIIILFIVQN). The Extracellular portion of the chain corresponds to 25-111 (FGRPTQEIDE…SAAPPPTTPW (87 aa)). A helical membrane pass occupies residues 112–132 (FIELLPSIFMVLIFIVFWFVF). Residues 133-689 (MQQSQGGGNR…QDNEENRKEE (557 aa)) are Cytoplasmic-facing. 205–212 (GPPGTGKT) serves as a coordination point for ATP. A Zn(2+)-binding site is contributed by H427. Residue E428 is part of the active site. Residues H431 and D503 each contribute to the Zn(2+) site. The span at 661-673 (EELIEVSSDKEEE) shows a compositional bias: basic and acidic residues. Residues 661 to 689 (EELIEVSSDKEEEKDNQDDQDNEENRKEE) form a disordered region.

In the central section; belongs to the AAA ATPase family. This sequence in the C-terminal section; belongs to the peptidase M41 family. Homohexamer. It depends on Zn(2+) as a cofactor.

The protein resides in the cell membrane. In terms of biological role, acts as a processive, ATP-dependent zinc metallopeptidase for both cytoplasmic and membrane proteins. Plays a role in the quality control of integral membrane proteins. In Alkaliphilus metalliredigens (strain QYMF), this protein is ATP-dependent zinc metalloprotease FtsH 2.